Reading from the N-terminus, the 166-residue chain is Large ribosomal subunit protein bL9 (166 aa).

The protein belongs to the bacterial ribosomal protein bL9 family.

Functionally, binds to the 23S rRNA. The protein is Large ribosomal subunit protein bL9 of Borrelia garinii subsp. bavariensis (strain ATCC BAA-2496 / DSM 23469 / PBi) (Borreliella bavariensis).